The following is a 215-amino-acid chain: Chaperone protein TorD (215 aa).

This sequence belongs to the TorD/DmsD family. TorD subfamily.

The protein localises to the cytoplasm. Functionally, involved in the biogenesis of TorA. Acts on TorA before the insertion of the molybdenum cofactor and, as a result, probably favors a conformation of the apoenzyme that is competent for acquiring the cofactor. In Shewanella piezotolerans (strain WP3 / JCM 13877), this protein is Chaperone protein TorD.